The primary structure comprises 396 residues: Elongation factor Tu (396 aa).

Positions 10–206 (KPHCNIGTIG…AVDAYIPQPE (197 aa)) constitute a tr-type G domain. Residues 19 to 26 (GHVDHGKT) form a G1 region. Residue 19-26 (GHVDHGKT) coordinates GTP. Threonine 26 lines the Mg(2+) pocket. Residues 60–64 (GITIS) are G2. The interval 81 to 84 (DCPG) is G3. Residues 81-85 (DCPGH) and 136-139 (NKCD) contribute to the GTP site. A G4 region spans residues 136–139 (NKCD). The tract at residues 174–176 (SAL) is G5.

It belongs to the TRAFAC class translation factor GTPase superfamily. Classic translation factor GTPase family. EF-Tu/EF-1A subfamily. In terms of assembly, monomer.

It localises to the cytoplasm. It carries out the reaction GTP + H2O = GDP + phosphate + H(+). Functionally, GTP hydrolase that promotes the GTP-dependent binding of aminoacyl-tRNA to the A-site of ribosomes during protein biosynthesis. The chain is Elongation factor Tu from Rhodopseudomonas palustris (strain BisB18).